A 1023-amino-acid chain; its full sequence is Sodium/potassium-transporting ATPase subunit alpha-1 (1023 aa).

Positions 1–5 (MGKGV) are excised as a propeptide. Residues 1-11 (MGKGVGRDKYE) show a composition bias toward basic and acidic residues. The segment at 1 to 38 (MGKGVGRDKYEPAAVSEHGDKKGKKAKKERDMDELKKE) is disordered. Topologically, residues 6–87 (GRDKYEPAAV…NALTPPPTTP (82 aa)) are cytoplasmic. Lys9 is subject to N6-acetyllysine. Tyr10 is subject to Phosphotyrosine. Ser16 carries the post-translational modification Phosphoserine; by PKC. Lys21 bears the N6-acetyllysine mark. A compositionally biased stretch (basic and acidic residues) spans 28–38 (KERDMDELKKE). Phosphoserine occurs at positions 40 and 47. The segment at 82-84 (PPP) is phosphoinositide-3 kinase binding. Residues 88-108 (EWVKFCRQLFGGFSMLLWIGA) traverse the membrane as a helical segment. Residues 109–131 (ILCFLAYGILAATEEDFDNDNLY) lie on the Extracellular side of the membrane. A helical transmembrane segment spans residues 132 to 152 (LGVVLAAVVIITGCFSYYQEA). The Cytoplasmic portion of the chain corresponds to 153–288 (KSSKIMESFK…GGQTPIAAEI (136 aa)). Residues 216 to 235 (SSLTGESEPQTRSPDFTNEN) are disordered. Ser228 is subject to Phosphoserine. Tyr260 carries the phosphotyrosine modification. The chain crosses the membrane as a helical span at residues 289–308 (EHFIHIITGVAVFLGVSFFI). The Extracellular portion of the chain corresponds to 309 to 320 (LSLILEYTWLEA). A helical membrane pass occupies residues 321–338 (VIFLIGIIVANVPEGLLA). Residues 339 to 772 (TVTVCLTLTA…EEGRLIFDNL (434 aa)) lie on the Cytoplasmic side of the membrane. The active-site 4-aspartylphosphate intermediate is Asp376. Phosphoserine is present on residues Ser452 and Ser484. Lys487 provides a ligand contact to ATP. Phosphotyrosine is present on Tyr542. Residues 596-717 (RAAVPDAVGK…QGAIVAVTGD (122 aa)) form a mediates interaction with SCN7A region. Lys661 is subject to N6-succinyllysine. Phosphoserine is present on residues Ser668 and Ser675. Mg(2+) is bound by residues Asp717 and Asp721. The chain crosses the membrane as a helical span at residues 773-792 (KKSIAYTLTSNIPEITPFLI). The Extracellular portion of the chain corresponds to 793–802 (FIIANIPLPL). The helical transmembrane segment at 803 to 823 (GTVTILCIDLGTDMVPAISLA) threads the bilayer. Residues 824-843 (YEQAESDIMKRQPRNPKTDK) are Cytoplasmic-facing. Residues 844–866 (LVNERLISMAYGQIGMIQALGGF) traverse the membrane as a helical segment. The Extracellular portion of the chain corresponds to 867-918 (FTYFVILAENGFLPFHLLGIRVDWDDRWINDVEDSYGQQWTYEQRKIVEFTC). The helical transmembrane segment at 919 to 938 (HTAFFVSIVVVQWADLVICK) threads the bilayer. The Cytoplasmic portion of the chain corresponds to 939-951 (TRRNSVFQQGMKN). Residue Ser943 is modified to Phosphoserine; by PKA. The chain crosses the membrane as a helical span at residues 952–970 (KILIFGLFEETALAAFLSY). Over 971 to 985 (CPGMGVALRMYPLKP) the chain is Extracellular. A helical transmembrane segment spans residues 986-1006 (TWWFCAFPYSLLIFVYDEIRK). Residues 1007–1023 (LIIRRRPGGWVEKETYY) lie on the Cytoplasmic side of the membrane.

Belongs to the cation transport ATPase (P-type) (TC 3.A.3) family. Type IIC subfamily. The sodium/potassium-transporting ATPase is composed of a catalytic alpha subunit, an auxiliary non-catalytic beta subunit and an additional regulatory subunit. Interacts with regulatory subunit FXYD1. Interacts with regulatory subunit FXYD3. Interacts with SIK1. Interacts with SLC35G1 and STIM1. Interacts with CLN3; this interaction regulates the sodium/potassium-transporting ATPase complex localization at the plasma membrane. Interacts with SCN7A; activates ATP1A1 P-type sodium:potassium-exchanging transporter activity which indirectly signals to nearby neurons to regulate sodium homeostasis. Phosphorylation on Tyr-10 modulates pumping activity. Phosphorylation of Ser-943 by PKA modulates the response of ATP1A1 to PKC. Dephosphorylation by protein phosphatase 2A (PP2A) following increases in intracellular sodium, leading to increase catalytic activity. As to expression, expressed in endocardial endothelial cells.

It localises to the cell membrane. It is found in the basolateral cell membrane. The protein localises to the sarcolemma. Its subcellular location is the cell projection. The protein resides in the axon. It localises to the melanosome. The enzyme catalyses K(+)(out) + Na(+)(in) + ATP + H2O = K(+)(in) + Na(+)(out) + ADP + phosphate + H(+). In terms of biological role, this is the catalytic component of the active enzyme, which catalyzes the hydrolysis of ATP coupled with the exchange of sodium and potassium ions across the plasma membrane. This action creates the electrochemical gradient of sodium and potassium ions, providing the energy for active transport of various nutrients. Could also be part of an osmosensory signaling pathway that senses body-fluid sodium levels and controls salt intake behavior as well as voluntary water intake to regulate sodium homeostasis. This chain is Sodium/potassium-transporting ATPase subunit alpha-1 (ATP1A1), found in Oryctolagus cuniculus (Rabbit).